Consider the following 261-residue polypeptide: Putative quercetin 2,3-dioxygenase Ta0133 (261 aa).

His17, His19, His61, and Glu63 together coordinate a divalent metal cation.

The protein belongs to the pirin family. The cofactor is a divalent metal cation.

It carries out the reaction quercetin + O2 = 2-(3,4-dihydroxybenzoyloxy)-4,6-dihydroxybenzoate + CO. It functions in the pathway flavonoid metabolism; quercetin degradation. In terms of biological role, putative quercetin 2,3-dioxygenase. The sequence is that of Putative quercetin 2,3-dioxygenase Ta0133 from Thermoplasma acidophilum (strain ATCC 25905 / DSM 1728 / JCM 9062 / NBRC 15155 / AMRC-C165).